A 62-amino-acid polypeptide reads, in one-letter code: Cytotoxin homolog (62 aa).

Intrachain disulfides connect cysteine 3-cysteine 22, cysteine 15-cysteine 40, cysteine 44-cysteine 55, and cysteine 56-cysteine 61.

This sequence belongs to the three-finger toxin family. Short-chain subfamily. Orphan group XV sub-subfamily. Expressed by the venom gland.

The protein resides in the secreted. It localises to the target cell membrane. Functionally, has low cytotoxic activity. This chain is Cytotoxin homolog, found in Naja kaouthia (Monocled cobra).